An 823-amino-acid polypeptide reads, in one-letter code: Sphingomyelin phosphodiesterase 4 (823 aa).

Residues Ser130 and Ser245 each carry the phosphoserine modification. Thr665 carries the post-translational modification Phosphothreonine. Ser749 carries the phosphoserine modification. A helical membrane pass occupies residues 776-796 (LLLLLMAFFVASLFCIGPLSC).

The cofactor is Mg(2+). In terms of tissue distribution, expressed in skeletal muscle (at protein level). As to expression, expressed in skeletal muscle but a lower levels than isoform 1 (at protein level).

It is found in the endoplasmic reticulum membrane. The protein resides in the golgi apparatus membrane. Its subcellular location is the nucleus envelope. It localises to the cell membrane. The protein localises to the sarcolemma. The enzyme catalyses a sphingomyelin + H2O = phosphocholine + an N-acylsphing-4-enine + H(+). With respect to regulation, activated by phosphatidylserine and tumor necrosis factor (TNF). Inhibited by scyphostatin. Catalyzes the hydrolysis of membrane sphingomyelin to form phosphorylcholine and ceramide. It has a relevant role in the homeostasis of membrane sphingolipids, thereby influencing membrane integrity, and endoplasmic reticulum organization and function. May sensitize cells to DNA damage-induced apoptosis. In skeletal muscle, mediates TNF-stimulated oxidant production. The protein is Sphingomyelin phosphodiesterase 4 (Smpd4) of Mus musculus (Mouse).